A 689-amino-acid polypeptide reads, in one-letter code: Chloride channel protein ClC-Kb (689 aa).

Residues Met1–Trp51 lie on the Cytoplasmic side of the membrane. 2 helical membrane passes run Tyr52–Gln83 and Leu92–Ala112. The segment at residues Pro117–Lys128 is an intramembrane region (helical). Residue Ser122 coordinates chloride. The next 2 helical transmembrane spans lie at Ile142–Thr161 and Met162–Leu181. A glycan (N-linked (GlcNAc...) asparagine) is linked at Asn194. Positions Ala204–Val225 form an intramembrane region, helical. Residues Tyr237–Val256 traverse the membrane as a helical segment. Residues Glu260, Glu262, Asp279, and Glu282 each contribute to the Ca(2+) site. 2 helical membrane passes run Met283–Val311 and Pro326–Glu343. The segment at residues Ala350–Ser361 is an intramembrane region (helical). The next 2 helical transmembrane spans lie at Gly402 to Pro422 and Met423 to Val442. Phe428 lines the chloride pocket. Residues Gly466–Ala498 constitute an intramembrane region (helical). Residues Pro502–Tyr522 form a helical membrane-spanning segment. Residues Asp523 to Lys689 are Cytoplasmic-facing. CBS domains lie at Met553–Arg613 and Ala630–Lys689.

The protein belongs to the chloride channel (TC 2.A.49) family. Post-translationally, N-glycosylated on a single asparagine, probably Asn-365 or Asn-375. As to expression, expressed in two distinct regions of the kidney; the proximal convoluted tubule and the diluting segment.

Its subcellular location is the cell membrane. Functionally, voltage-gated chloride channel. Chloride channels have several functions including the regulation of cell volume, the stabilization of membrane potential, signal transduction and transepithelial transport. In Xenopus laevis (African clawed frog), this protein is Chloride channel protein ClC-Kb (clcnkb).